The following is a 198-amino-acid chain: Pyridoxine/pyridoxamine 5'-phosphate oxidase 2 (198 aa).

FMN-binding positions include R42, 59-60 (NT), K66, and 121-122 (RS).

This sequence belongs to the pyridoxamine 5'-phosphate oxidase family. As to quaternary structure, homodimer. FMN serves as cofactor.

It carries out the reaction pyridoxamine 5'-phosphate + O2 + H2O = pyridoxal 5'-phosphate + H2O2 + NH4(+). The catalysed reaction is pyridoxine 5'-phosphate + O2 = pyridoxal 5'-phosphate + H2O2. Its pathway is cofactor metabolism; pyridoxal 5'-phosphate salvage; pyridoxal 5'-phosphate from pyridoxamine 5'-phosphate: step 1/1. The protein operates within cofactor metabolism; pyridoxal 5'-phosphate salvage; pyridoxal 5'-phosphate from pyridoxine 5'-phosphate: step 1/1. Functionally, catalyzes the oxidation of either pyridoxine 5'-phosphate (PNP) or pyridoxamine 5'-phosphate (PMP) into pyridoxal 5'-phosphate (PLP). Has an in vitro catalytic efficiency for PNP approximately 300-fold lower than that of PPOX1. This is Pyridoxine/pyridoxamine 5'-phosphate oxidase 2 (PPOX2) from Arabidopsis thaliana (Mouse-ear cress).